A 115-amino-acid polypeptide reads, in one-letter code: Large ribosomal subunit protein bL20 (115 aa).

The protein belongs to the bacterial ribosomal protein bL20 family.

Its function is as follows. Binds directly to 23S ribosomal RNA and is necessary for the in vitro assembly process of the 50S ribosomal subunit. It is not involved in the protein synthesizing functions of that subunit. This is Large ribosomal subunit protein bL20 from Pelodictyon phaeoclathratiforme (strain DSM 5477 / BU-1).